Consider the following 723-residue polypeptide: Polyribonucleotide nucleotidyltransferase (723 aa).

Asp488 and Asp494 together coordinate Mg(2+). In terms of domain architecture, KH spans 555 to 614 (PKIITLNIKPEKIKDVIGPGGKQINAIIEETGVKIDIEQDGTVYIASQDQAMNRKAIAII). An S1 motif domain is found at 624–692 (GEVYTGKVRR…HQGRVNLSRK (69 aa)). The interval 692–723 (KALLEKKEQPEGDKKPQAEKKFYPKTKKPESK) is disordered. The segment covering 693 to 723 (ALLEKKEQPEGDKKPQAEKKFYPKTKKPESK) has biased composition (basic and acidic residues).

This sequence belongs to the polyribonucleotide nucleotidyltransferase family. Requires Mg(2+) as cofactor.

Its subcellular location is the cytoplasm. The enzyme catalyses RNA(n+1) + phosphate = RNA(n) + a ribonucleoside 5'-diphosphate. Functionally, involved in mRNA degradation. Catalyzes the phosphorolysis of single-stranded polyribonucleotides processively in the 3'- to 5'-direction. In Listeria welshimeri serovar 6b (strain ATCC 35897 / DSM 20650 / CCUG 15529 / CIP 8149 / NCTC 11857 / SLCC 5334 / V8), this protein is Polyribonucleotide nucleotidyltransferase.